A 404-amino-acid polypeptide reads, in one-letter code: tRNA/tmRNA (uracil-C(5))-methyltransferase (404 aa).

Positions 218, 251, 256, 272, and 332 each coordinate S-adenosyl-L-methionine. The Nucleophile role is filled by C358. The active-site Proton acceptor is E392.

This sequence belongs to the class I-like SAM-binding methyltransferase superfamily. RNA M5U methyltransferase family. TrmA subfamily.

It carries out the reaction uridine(54) in tRNA + S-adenosyl-L-methionine = 5-methyluridine(54) in tRNA + S-adenosyl-L-homocysteine + H(+). It catalyses the reaction uridine(341) in tmRNA + S-adenosyl-L-methionine = 5-methyluridine(341) in tmRNA + S-adenosyl-L-homocysteine + H(+). Functionally, dual-specificity methyltransferase that catalyzes the formation of 5-methyluridine at position 54 (m5U54) in all tRNAs, and that of position 341 (m5U341) in tmRNA (transfer-mRNA). The protein is tRNA/tmRNA (uracil-C(5))-methyltransferase of Helicobacter hepaticus (strain ATCC 51449 / 3B1).